We begin with the raw amino-acid sequence, 170 residues long: MYCPFCRHPDSRVVDSRVTDDGTAIRRRRSCPECGRRFTTVETAALSVIKRSGVIEPFSRAKVIAGVRKACQGRPVSEDALALLAQRVEDELRATGCSEVTSQEVGLAVLGPLRELDDVAYLRFASVYRGFESLEDFEAEIALQRAERALERSETVERGRPVPSRGVDDR.

A zinc finger spans residues 3-34 (CPFCRHPDSRVVDSRVTDDGTAIRRRRSCPEC). Residues 46 to 136 (LSVIKRSGVI…VYRGFESLED (91 aa)) form the ATP-cone domain. The segment at 151–170 (ERSETVERGRPVPSRGVDDR) is disordered.

It belongs to the NrdR family. It depends on Zn(2+) as a cofactor.

Its function is as follows. Negatively regulates transcription of bacterial ribonucleotide reductase nrd genes and operons by binding to NrdR-boxes. The protein is Transcriptional repressor NrdR of Acidothermus cellulolyticus (strain ATCC 43068 / DSM 8971 / 11B).